Reading from the N-terminus, the 163-residue chain is uncharacterized protein (163 aa).

The chain crosses the membrane as a helical span at residues 11 to 31 (LSWFLLLVVVILIFFLLLSCL).

It localises to the membrane. This is an uncharacterized protein from Saccharomyces cerevisiae (strain ATCC 204508 / S288c) (Baker's yeast).